Reading from the N-terminus, the 298-residue chain is Protease HtpX homolog (298 aa).

2 helical membrane passes run 14–34 and 39–59; these read VVLL…AGYL and YAMG…SMIF. His-143 is a Zn(2+) binding site. Residue Glu-144 is part of the active site. His-147 contributes to the Zn(2+) binding site. 2 consecutive transmembrane segments (helical) span residues 158 to 178 and 197 to 217; these read IAVA…RMLW and IITL…ASLI. Glu-226 lines the Zn(2+) pocket.

It belongs to the peptidase M48B family. Requires Zn(2+) as cofactor.

It localises to the cell membrane. The sequence is that of Protease HtpX homolog from Streptococcus pyogenes serotype M49 (strain NZ131).